We begin with the raw amino-acid sequence, 96 residues long: Large ribosomal subunit protein uL23 (96 aa).

Belongs to the universal ribosomal protein uL23 family. As to quaternary structure, part of the 50S ribosomal subunit. Contacts protein L29, and trigger factor when it is bound to the ribosome.

One of the early assembly proteins it binds 23S rRNA. One of the proteins that surrounds the polypeptide exit tunnel on the outside of the ribosome. Forms the main docking site for trigger factor binding to the ribosome. The protein is Large ribosomal subunit protein uL23 of Alkaliphilus metalliredigens (strain QYMF).